The following is a 285-amino-acid chain: NAD kinase (285 aa).

D66 serves as the catalytic Proton acceptor. NAD(+) is bound by residues 66-67 (DG), 137-138 (ND), R148, R165, D167, and 178-183 (TAYSLS).

This sequence belongs to the NAD kinase family. Requires a divalent metal cation as cofactor.

It localises to the cytoplasm. The catalysed reaction is NAD(+) + ATP = ADP + NADP(+) + H(+). Involved in the regulation of the intracellular balance of NAD and NADP, and is a key enzyme in the biosynthesis of NADP. Catalyzes specifically the phosphorylation on 2'-hydroxyl of the adenosine moiety of NAD to yield NADP. This chain is NAD kinase, found in Chlorobium phaeobacteroides (strain BS1).